Reading from the N-terminus, the 608-residue chain is Actin-related protein 8 (608 aa).

Positions 1–20 (MQRSRASSTSSGRLQASQQV) are disordered. 272–275 (DIGA) serves as a coordination point for ATP.

It belongs to the actin family. ARP8 subfamily. Component of the chromatin remodeling Ino80 complex. Exists as monomers and dimers, but the dimer is most probably the biologically relevant form required for stable interactions with histones that exploits the twofold symmetry of the nucleosome core.

The protein resides in the nucleus. Functionally, plays an important role in the functional organization of mitotic chromosomes. Exhibits low basal ATPase activity, and unable to polymerize. Proposed core component of the chromatin remodeling INO80 complex which is involved in transcriptional regulation, DNA replication and probably DNA repair. Strongly prefer nucleosomes and H3-H4 tetramers over H2A-H2B dimers, suggesting it may act as a nucleosome recognition module within the complex. The sequence is that of Actin-related protein 8 from Drosophila pseudoobscura pseudoobscura (Fruit fly).